A 460-amino-acid chain; its full sequence is V-type ATP synthase beta chain (460 aa).

It belongs to the ATPase alpha/beta chains family.

Functionally, produces ATP from ADP in the presence of a proton gradient across the membrane. The V-type beta chain is a regulatory subunit. In Dictyoglomus turgidum (strain DSM 6724 / Z-1310), this protein is V-type ATP synthase beta chain.